Here is a 158-residue protein sequence, read N- to C-terminus: Small ribosomal subunit protein uS7 (158 aa).

It belongs to the universal ribosomal protein uS7 family. Part of the 30S ribosomal subunit. Contacts proteins S9 and S11.

One of the primary rRNA binding proteins, it binds directly to 16S rRNA where it nucleates assembly of the head domain of the 30S subunit. Is located at the subunit interface close to the decoding center, probably blocks exit of the E-site tRNA. The sequence is that of Small ribosomal subunit protein uS7 from Phocaeicola vulgatus (strain ATCC 8482 / DSM 1447 / JCM 5826 / CCUG 4940 / NBRC 14291 / NCTC 11154) (Bacteroides vulgatus).